Here is an 88-residue protein sequence, read N- to C-terminus: UPF0250 protein PM1928 (88 aa).

It belongs to the UPF0250 family.

The sequence is that of UPF0250 protein PM1928 from Pasteurella multocida (strain Pm70).